A 456-amino-acid chain; its full sequence is MSKSIEKMISHLKNQGFVFQGSEIYGGLANSWDYGPLGCEVKNKLKKVWWDFFVKKNPLNVGLDSSIILNSKVWKASGHIDGFNDPLIDCKNCKSRWRADKLIEEFDSSINTGIMTSAQLEDYINQNNILCKKCQKKDFTQIRQFALMFKTNQGVLEDDSSIVYLRPETAQGIFINFKNVQRSMRKKLPFGIGQIGKSFRNEITPGNFIFRTREFEQMELEFFFDPSDQKDWFKYWLDQIELFLTKKICLDKSNYKIRENLKDELSHYALKTSDIEFNFPFGWGELWGISHRSDFDLKVHQNLSKEDLTVLKEENNQKVLANVIEPSVGVERLMLAIFWQAYTEEQLEENNSRTVLKLPYNLAPYQVAITPLSKQLNQNAHQLFLELLKDFDAVYDETGNIGKRYRRQDAIGTPFVITYDFQTLEDQKVTIRYRDTMKQERILISQLKDFLNSQFN.

Substrate-binding residues include arginine 98 and glutamate 168. Residues 200 to 202 (RNE), 210 to 215 (FRTREF), 285 to 286 (EL), and 329 to 332 (GVER) contribute to the ATP site. 215-219 (FEQME) is a binding site for substrate. 325-329 (EPSVG) lines the substrate pocket.

This sequence belongs to the class-II aminoacyl-tRNA synthetase family. As to quaternary structure, homodimer.

The protein localises to the cytoplasm. The enzyme catalyses tRNA(Gly) + glycine + ATP = glycyl-tRNA(Gly) + AMP + diphosphate. Functionally, catalyzes the attachment of glycine to tRNA(Gly). The protein is Glycine--tRNA ligase of Mycoplasma mycoides subsp. mycoides SC (strain CCUG 32753 / NCTC 10114 / PG1).